The primary structure comprises 22 residues: Major outer membrane protein (22 aa).

The protein belongs to the Gram-negative porin family. As to quaternary structure, disulfide bond interactions within and between MOMP molecules and other components form high molecular-weight oligomers.

It is found in the cell outer membrane. Structural rigidity of the outer membrane of elementary bodies and porin forming, permitting diffusion of solutes through the intracellular reticulate body membrane. This is Major outer membrane protein (ompH) from Avibacterium gallinarum (Pasteurella gallinarum).